A 180-amino-acid chain; its full sequence is Large ribosomal subunit protein uL5 (180 aa).

Belongs to the universal ribosomal protein uL5 family. In terms of assembly, part of the 50S ribosomal subunit; part of the 5S rRNA/L5/L18/L25 subcomplex. Contacts the 5S rRNA and the P site tRNA. Forms a bridge to the 30S subunit in the 70S ribosome.

In terms of biological role, this is one of the proteins that bind and probably mediate the attachment of the 5S RNA into the large ribosomal subunit, where it forms part of the central protuberance. In the 70S ribosome it contacts protein S13 of the 30S subunit (bridge B1b), connecting the 2 subunits; this bridge is implicated in subunit movement. Contacts the P site tRNA; the 5S rRNA and some of its associated proteins might help stabilize positioning of ribosome-bound tRNAs. The polypeptide is Large ribosomal subunit protein uL5 (Ruminiclostridium cellulolyticum (strain ATCC 35319 / DSM 5812 / JCM 6584 / H10) (Clostridium cellulolyticum)).